Here is a 224-residue protein sequence, read N- to C-terminus: Dickkopf-related protein 4 (224 aa).

A signal peptide spans 1-18 (MVAAVLLGLSWLCSPLGA). The interval 41 to 90 (CLSDTDCNTRKFCLQPRDEKPFCATCRGLRRRCQRDAMCCPGTLCVNDVC) is DKK-type Cys-1. The tract at residues 109–139 (GTHAEGTTGHPVQENQPKRKPSIKKSQGRKG) is disordered. The segment covering 126–136 (KRKPSIKKSQG) has biased composition (basic residues). Intrachain disulfides connect cysteine 145-cysteine 157, cysteine 151-cysteine 166, cysteine 156-cysteine 194, cysteine 176-cysteine 202, and cysteine 196-cysteine 218. Residues 145-218 (CLRTFDCGPG…NRQHARLRVC (74 aa)) form a DKK-type Cys-2 region.

This sequence belongs to the dickkopf family. In terms of assembly, interacts with LRP5 and LRP6. Post-translationally, appears to be not glycosylated. Can be proteolytically processed by a furin-like protease. In terms of tissue distribution, expressed in cerebellum, T-cells, esophagus and lung.

It localises to the secreted. Functionally, antagonizes canonical Wnt signaling by inhibiting LRP5/6 interaction with Wnt and by forming a ternary complex with the transmembrane protein KREMEN that promotes internalization of LRP5/6. DKKs play an important role in vertebrate development, where they locally inhibit Wnt regulated processes such as antero-posterior axial patterning, limb development, somitogenesis and eye formation. In the adult, Dkks are implicated in bone formation and bone disease, cancer and Alzheimer disease. The polypeptide is Dickkopf-related protein 4 (DKK4) (Homo sapiens (Human)).